A 694-amino-acid chain; its full sequence is Ferric reductase transmembrane component 5 (694 aa).

The signal sequence occupies residues 1–19 (MLFARLVLLLVYLAPGSLA). The Extracellular segment spans residues 20–163 (KPASTKKRTQ…LDNIDKGNVY (144 aa)). N117 carries an N-linked (GlcNAc...) asparagine glycan. Residues 164–184 (GVTICLYWIGVLFIAAVYHFL) form a helical membrane-spanning segment. The Cytoplasmic portion of the chain corresponds to 185–222 (NFSRLKQTVFKNKVSAFLRGHYVLPALVHNHAMSVGRW). A helical membrane pass occupies residues 223 to 243 (FFIGLVPTRLETLVLFGYVLL). Residues 244-267 (HGFLLSSYNFDHNELLSDRRSQVL) lie on the Extracellular side of the membrane. A helical transmembrane segment spans residues 268–288 (IFLSDRAGILAFAHFPLIVLF). One can recognise a Ferric oxidoreductase domain in the interval 274-408 (AGILAFAHFP…GWGEWIMACA (135 aa)). The Cytoplasmic portion of the chain corresponds to 289 to 311 (GGKNSTMTWLTGIRYTAFITYHK). Positions 310 and 324 each coordinate heme. The helical transmembrane segment at 312-334 (WLGRFMLVDCTIHAIGYTYHAYI) threads the bilayer. The Extracellular portion of the chain corresponds to 335–347 (ENYWKYVKYSDLW). A helical membrane pass occupies residues 348–368 (TSGRHAMIIVGILVFFSFFFF). Over 369-371 (RRH) the chain is Cytoplasmic. Residues 372-392 (YYELFVITHIILAIGFFHACW) form a helical membrane-spanning segment. Heme-binding residues include H380 and H394. Residues 393–403 (KHCYKLGWGEW) are Extracellular-facing. Residues 404-424 (IMACALFWIADRILRLIKIAI) form a helical membrane-spanning segment. Residues 409–528 (LFWIADRILR…EGPYGQSTRT (120 aa)) enclose the FAD-binding FR-type domain. Residues 425–694 (FGMPWAKLKL…IEYVEEFQNW (270 aa)) lie on the Cytoplasmic side of the membrane. 473 to 479 (HPFTVMD) is a binding site for FAD. Residues 520–523 (GPYG) and 660–661 (CG) contribute to the NADP(+) site.

It belongs to the ferric reductase (FRE) family. FAD is required as a cofactor.

The protein localises to the cell membrane. The enzyme catalyses 2 a Fe(II)-siderophore + NADP(+) + H(+) = 2 a Fe(III)-siderophore + NADPH. Functionally, metalloreductase responsible for reducing extracellular iron and copper prior to import. Catalyzes the reductive uptake of Fe(3+)-salts and Fe(3+) bound to catecholate or hydroxamate siderophores. Fe(3+) is reduced to Fe(2+), which then dissociates from the siderophore and can be imported by the high-affinity Fe(2+) transport complex in the plasma membrane. The chain is Ferric reductase transmembrane component 5 (FRE5) from Saccharomyces cerevisiae (strain ATCC 204508 / S288c) (Baker's yeast).